We begin with the raw amino-acid sequence, 334 residues long: D-alanine--D-alanine ligase (334 aa).

Residues 110–306 form the ATP-grasp domain; the sequence is KHVLKSLGID…FDHVVDLIVQ (197 aa). 138–190 is a binding site for ATP; sequence LPYPFVIKPVRGGSTIGVHAIFSKSEYLDLSAHADTLEDRMIVEEYVSGQEVQ. Mg(2+) is bound by residues Asp258, Glu272, and Asn274.

It belongs to the D-alanine--D-alanine ligase family. The cofactor is Mg(2+). Mn(2+) serves as cofactor.

The protein resides in the cytoplasm. The enzyme catalyses 2 D-alanine + ATP = D-alanyl-D-alanine + ADP + phosphate + H(+). Its pathway is cell wall biogenesis; peptidoglycan biosynthesis. Cell wall formation. The chain is D-alanine--D-alanine ligase from Anaplasma marginale (strain Florida).